The following is a 296-amino-acid chain: Small ribosomal subunit biogenesis GTPase RsgA (296 aa).

Residues 65–223 form the CP-type G domain; sequence INRIGRPAVA…LADTPGFSSI (159 aa). GTP-binding positions include 114–117 and 166–174; these read SKAD and GQSGAGKST. Zn(2+) is bound by residues Cys247, Cys252, His254, and Cys260.

The protein belongs to the TRAFAC class YlqF/YawG GTPase family. RsgA subfamily. As to quaternary structure, monomer. Associates with 30S ribosomal subunit, binds 16S rRNA. The cofactor is Zn(2+).

The protein localises to the cytoplasm. Its function is as follows. One of several proteins that assist in the late maturation steps of the functional core of the 30S ribosomal subunit. Helps release RbfA from mature subunits. May play a role in the assembly of ribosomal proteins into the subunit. Circularly permuted GTPase that catalyzes slow GTP hydrolysis, GTPase activity is stimulated by the 30S ribosomal subunit. This is Small ribosomal subunit biogenesis GTPase RsgA from Lactobacillus acidophilus (strain ATCC 700396 / NCK56 / N2 / NCFM).